Here is a 328-residue protein sequence, read N- to C-terminus: Tetraacyldisaccharide 4'-kinase (328 aa).

55–62 (TAGGNGKT) is a binding site for ATP.

This sequence belongs to the LpxK family.

The enzyme catalyses a lipid A disaccharide + ATP = a lipid IVA + ADP + H(+). It functions in the pathway glycolipid biosynthesis; lipid IV(A) biosynthesis; lipid IV(A) from (3R)-3-hydroxytetradecanoyl-[acyl-carrier-protein] and UDP-N-acetyl-alpha-D-glucosamine: step 6/6. Transfers the gamma-phosphate of ATP to the 4'-position of a tetraacyldisaccharide 1-phosphate intermediate (termed DS-1-P) to form tetraacyldisaccharide 1,4'-bis-phosphate (lipid IVA). The chain is Tetraacyldisaccharide 4'-kinase from Escherichia coli O45:K1 (strain S88 / ExPEC).